The chain runs to 1311 residues: Clustered mitochondria protein homolog (1311 aa).

Residues 1 to 18 (MAEKTNGAAAPNGAADAP) are compositionally biased toward low complexity. Positions 1–27 (MAEKTNGAAAPNGAADAPKSSPEQAQD) are disordered. One can recognise a Clu domain in the interval 324–568 (DITRTQESFL…RITPLDVSWQ (245 aa)). A TPR 1 repeat occupies 491–525 (IDYGAVDGKDLVATDERFVPQFQKLSKALKVKPHA). The span at 606-630 (SEVAKRGQAKKDQAAVEEKKEAKAE) shows a compositional bias: basic and acidic residues. 2 disordered regions span residues 606–694 (SEVA…SSDR) and 925–966 (PAPV…SSTI). The span at 631–661 (SEEDSDSSSEEESSSDESDSEESSSDEDEEE) shows a compositional bias: acidic residues. Positions 665 to 675 (PKKKSVPKKAA) are enriched in basic residues. The span at 676–694 (KKEEVKEEKKDEKEASSDR) shows a compositional bias: basic and acidic residues. TPR repeat units lie at residues 1034–1067 (ARVY…AERT), 1076–1109 (LLDY…WKII), and 1118–1151 (ITTI…CEVV). Over residues 1276–1286 (LKFIEGTDKQK) the composition is skewed to basic and acidic residues. The interval 1276–1311 (LKFIEGTDKQKKPAAKKRTGRANPKRRGAEPVSTKA) is disordered. The segment covering 1287–1301 (KPAAKKRTGRANPKR) has biased composition (basic residues).

The protein belongs to the CLU family. As to quaternary structure, may associate with the eukaryotic translation initiation factor 3 (eIF-3) complex.

The protein resides in the cytoplasm. In terms of biological role, mRNA-binding protein involved in proper cytoplasmic distribution of mitochondria. This Pyricularia oryzae (strain 70-15 / ATCC MYA-4617 / FGSC 8958) (Rice blast fungus) protein is Clustered mitochondria protein homolog.